Consider the following 177-residue polypeptide: MADFTTIARPYAKAAFDFAVEKGQLDQWGQMLSFAAEVAQNEQISELLSGSMSADKLAELFIAICGEQVDEFGQNLLKVMAENGRLAALPDVCTLFFVLKKEHEKEIDVEVISATELSDEQCANISQKLEQRLERKVKLNCSVDEALLGGVIIRAGDLVIDNSARGRLNRLSDALQS.

The protein belongs to the ATPase delta chain family. In terms of assembly, F-type ATPases have 2 components, F(1) - the catalytic core - and F(0) - the membrane proton channel. F(1) has five subunits: alpha(3), beta(3), gamma(1), delta(1), epsilon(1). F(0) has three main subunits: a(1), b(2) and c(10-14). The alpha and beta chains form an alternating ring which encloses part of the gamma chain. F(1) is attached to F(0) by a central stalk formed by the gamma and epsilon chains, while a peripheral stalk is formed by the delta and b chains.

It is found in the cell inner membrane. Its function is as follows. F(1)F(0) ATP synthase produces ATP from ADP in the presence of a proton or sodium gradient. F-type ATPases consist of two structural domains, F(1) containing the extramembraneous catalytic core and F(0) containing the membrane proton channel, linked together by a central stalk and a peripheral stalk. During catalysis, ATP synthesis in the catalytic domain of F(1) is coupled via a rotary mechanism of the central stalk subunits to proton translocation. This protein is part of the stalk that links CF(0) to CF(1). It either transmits conformational changes from CF(0) to CF(1) or is implicated in proton conduction. The chain is ATP synthase subunit delta from Vibrio vulnificus (strain CMCP6).